Here is a 154-residue protein sequence, read N- to C-terminus: D-aminoacyl-tRNA deacylase (154 aa).

A Gly-cisPro motif, important for rejection of L-amino acids motif is present at residues 138 to 139; that stretch reads GP.

The protein belongs to the DTD family. In terms of assembly, homodimer.

Its subcellular location is the cytoplasm. It catalyses the reaction glycyl-tRNA(Ala) + H2O = tRNA(Ala) + glycine + H(+). The catalysed reaction is a D-aminoacyl-tRNA + H2O = a tRNA + a D-alpha-amino acid + H(+). In terms of biological role, an aminoacyl-tRNA editing enzyme that deacylates mischarged D-aminoacyl-tRNAs. Also deacylates mischarged glycyl-tRNA(Ala), protecting cells against glycine mischarging by AlaRS. Acts via tRNA-based rather than protein-based catalysis; rejects L-amino acids rather than detecting D-amino acids in the active site. By recycling D-aminoacyl-tRNA to D-amino acids and free tRNA molecules, this enzyme counteracts the toxicity associated with the formation of D-aminoacyl-tRNA entities in vivo and helps enforce protein L-homochirality. The sequence is that of D-aminoacyl-tRNA deacylase from Halorhodospira halophila (strain DSM 244 / SL1) (Ectothiorhodospira halophila (strain DSM 244 / SL1)).